The chain runs to 259 residues: Glucosamine-6-phosphate deaminase (259 aa).

The active-site Proton acceptor; for enolization step is the Asp66. The For ring-opening step role is filled by Asp135. The Proton acceptor; for ring-opening step role is filled by His137. Glu142 serves as the catalytic For ring-opening step.

Belongs to the glucosamine/galactosamine-6-phosphate isomerase family. NagB subfamily.

It catalyses the reaction alpha-D-glucosamine 6-phosphate + H2O = beta-D-fructose 6-phosphate + NH4(+). It functions in the pathway amino-sugar metabolism; N-acetylneuraminate degradation; D-fructose 6-phosphate from N-acetylneuraminate: step 5/5. In terms of biological role, catalyzes the reversible isomerization-deamination of glucosamine 6-phosphate (GlcN6P) to form fructose 6-phosphate (Fru6P) and ammonium ion. This chain is Glucosamine-6-phosphate deaminase, found in Rhodococcus jostii (strain RHA1).